The primary structure comprises 578 residues: ATP-dependent RNA helicase CHR1 (578 aa).

The interval 1 to 95 is disordered; sequence MDIFRILSRG…NETKAKEEEI (95 aa). Basic and acidic residues-rich tracts occupy residues 44–53 and 78–94; these read EVERETDFFH and NKEEQMETNETKAKEEE. The Q motif motif lies at 131 to 159; sequence DMIGRFHINKKVLSNLIDNEFVEPTPIQC. A Helicase ATP-binding domain is found at 162–339; sequence IPITLNNRDL…HSIMKDPLRI (178 aa). 175–182 is a binding site for ATP; the sequence is APTGSGKT. The short motif at 286–289 is the DEAD box element; it reads DEAD. The 165-residue stretch at 350–514 folds into the Helicase C-terminal domain; sequence TIDQKLVFTG…GYSQWMEDMG (165 aa). 2 stretches are compositionally biased toward basic and acidic residues: residues 517–531 and 561–578; these read SKKEKKQIKTHEIQR and ESKQESKQESHSNDEREE. The tract at residues 517-578 is disordered; sequence SKKEKKQIKT…ESHSNDEREE (62 aa).

This sequence belongs to the DEAD box helicase family. DDX52/ROK1 subfamily. In terms of assembly, interacts with the U3 snoRNA and is associated with the 90S and 40S pre-ribosomes.

The protein resides in the nucleus. It is found in the nucleolus. The catalysed reaction is ATP + H2O = ADP + phosphate + H(+). ATP-dependent RNA helicase involved in 40S ribosomal subunit biogenesis. Required for the processing and cleavage of 35S pre-rRNA at sites A0, A1, and A2, leading to mature 18S rRNA. In Candida albicans (strain SC5314 / ATCC MYA-2876) (Yeast), this protein is ATP-dependent RNA helicase CHR1 (CHR1).